Reading from the N-terminus, the 147-residue chain is Acidic phospholipase A2 S3-24 (147 aa).

The first 19 residues, 1 to 19 (MYPAHLLVLLAVCVSLLGA), serve as a signal peptide directing secretion. Residues 20 to 27 (SDMPPQPL) constitute a propeptide that is removed on maturation. 7 disulfide bridges follow: Cys-38–Cys-99, Cys-54–Cys-146, Cys-56–Cys-72, Cys-71–Cys-127, Cys-78–Cys-120, Cys-88–Cys-113, and Cys-106–Cys-118. Ca(2+) is bound by residues Tyr-55, Gly-57, and Gly-59. His-75 is a catalytic residue. Asp-76 contacts Ca(2+). Residue Asp-121 is part of the active site.

Belongs to the phospholipase A2 family. Group I subfamily. D49 sub-subfamily. Requires Ca(2+) as cofactor. In terms of tissue distribution, expressed by the venom gland.

It localises to the secreted. It catalyses the reaction a 1,2-diacyl-sn-glycero-3-phosphocholine + H2O = a 1-acyl-sn-glycero-3-phosphocholine + a fatty acid + H(+). Its function is as follows. Snake venom phospholipase A2 (PLA2) that inhibits collagen-induced platelet aggregation. PLA2 catalyzes the calcium-dependent hydrolysis of the 2-acyl groups in 3-sn-phosphoglycerides. This chain is Acidic phospholipase A2 S3-24, found in Austrelaps superbus (Lowland copperhead snake).